The chain runs to 196 residues: Beta-crystallin A4 (196 aa).

The residue at position 2 (T2) is an N-acetylthreonine. An N-terminal arm region spans residues T2–H11. 2 Beta/gamma crystallin 'Greek key' domains span residues W12 to S51 and G52 to A98. Residues C99 to D104 form a connecting peptide region. Beta/gamma crystallin 'Greek key' domains follow at residues S105–S146 and G147–Q195.

The protein belongs to the beta/gamma-crystallin family. In terms of assembly, homo/heterodimer, or complexes of higher-order. The structure of beta-crystallin oligomers seems to be stabilized through interactions between the N-terminal arms.

Its function is as follows. Crystallins are the dominant structural components of the vertebrate eye lens. In Mus musculus (Mouse), this protein is Beta-crystallin A4 (Cryba4).